The following is a 331-amino-acid chain: Cytosolic 5'-nucleotidase 3A (331 aa).

Aspartate 83 serves as the catalytic Nucleophile. Aspartate 83 and aspartate 85 together coordinate Mg(2+). Residue aspartate 85 is the Proton donor of the active site. Glutamate 130 serves as a coordination point for CMP. N(7)-methyl-GMP is bound by residues glutamate 130 and serine 151. Substrate-binding positions include 198–200 and lysine 247; that span reads SAG. Aspartate 272 lines the Mg(2+) pocket. Residue serine 273 is modified to Phosphoserine.

It belongs to the pyrimidine 5'-nucleotidase family. In terms of assembly, monomer. In terms of tissue distribution, isoform 2 is highly expressed in the brain, heart, spleen, kidney and blood. Isoform 2 is expressed (at protein level) in the spleen, skeletal muscle and gastrointestinal epithelia.

It localises to the cytoplasm. It carries out the reaction N(7)-methyl-GMP + H2O = N(7)-methylguanosine + phosphate. It catalyses the reaction a ribonucleoside 5'-phosphate + H2O = a ribonucleoside + phosphate. Nucleotidase which shows specific activity towards cytidine monophosphate (CMP) and 7-methylguanosine monophosphate (m(7)GMP). CMP seems to be the preferred substrate. This chain is Cytosolic 5'-nucleotidase 3A (Nt5c3a), found in Mus musculus (Mouse).